The chain runs to 227 residues: Enolase-phosphatase E1 (227 aa).

It belongs to the HAD-like hydrolase superfamily. MasA/MtnC family. Monomer. The cofactor is Mg(2+).

It carries out the reaction 5-methylsulfanyl-2,3-dioxopentyl phosphate + H2O = 1,2-dihydroxy-5-(methylsulfanyl)pent-1-en-3-one + phosphate. Its pathway is amino-acid biosynthesis; L-methionine biosynthesis via salvage pathway; L-methionine from S-methyl-5-thio-alpha-D-ribose 1-phosphate: step 3/6. It functions in the pathway amino-acid biosynthesis; L-methionine biosynthesis via salvage pathway; L-methionine from S-methyl-5-thio-alpha-D-ribose 1-phosphate: step 4/6. Its function is as follows. Bifunctional enzyme that catalyzes the enolization of 2,3-diketo-5-methylthiopentyl-1-phosphate (DK-MTP-1-P) into the intermediate 2-hydroxy-3-keto-5-methylthiopentenyl-1-phosphate (HK-MTPenyl-1-P), which is then dephosphorylated to form the acireductone 1,2-dihydroxy-3-keto-5-methylthiopentene (DHK-MTPene). In Gluconobacter oxydans (strain 621H) (Gluconobacter suboxydans), this protein is Enolase-phosphatase E1.